Here is a 394-residue protein sequence, read N- to C-terminus: Elongation factor Tu (394 aa).

The tr-type G domain occupies 10–205 (KPHMNVGTIG…TMDSYFDLPE (196 aa)). Positions 19–26 (GHVDHGKT) are G1. Position 19 to 26 (19 to 26 (GHVDHGKT)) interacts with GTP. Residue Thr-26 coordinates Mg(2+). Positions 61–65 (GITIN) are G2. The interval 82-85 (DCPG) is G3. Residues 82–86 (DCPGH) and 137–140 (NKLD) contribute to the GTP site. Residues 137-140 (NKLD) form a G4 region. The segment at 173-175 (SAF) is G5.

It belongs to the TRAFAC class translation factor GTPase superfamily. Classic translation factor GTPase family. EF-Tu/EF-1A subfamily. Monomer.

Its subcellular location is the cytoplasm. It carries out the reaction GTP + H2O = GDP + phosphate + H(+). Functionally, GTP hydrolase that promotes the GTP-dependent binding of aminoacyl-tRNA to the A-site of ribosomes during protein biosynthesis. This chain is Elongation factor Tu, found in Borrelia hermsii (strain HS1 / DAH).